A 244-amino-acid polypeptide reads, in one-letter code: Eukaryotic translation initiation factor 4E type 1B (244 aa).

Residues 1–26 show a composition bias toward basic and acidic residues; that stretch reads MNKVEGGGHKEEVVVKEKEVVKEKPS. The segment at 1–57 is disordered; sequence MNKVEGGGHKEEVVVKEKEVVKEKPSEATAEGVQAGEAKDLPGSLKTQRRKAHREHP. The segment at 65-68 is EIF4EBP1/2/3 binding; it reads HPLQ. 84–85 contacts mRNA; the sequence is WQ. Positions 101–105 are EIF4EBP1/2/3 binding; the sequence is WAVYS. 130 to 131 contributes to the mRNA binding site; it reads WE. Positions 160-167 are EIF4EBP1/2/3 binding; that stretch reads ETLLCLVG. MRNA-binding positions include 185 to 190 and 233 to 235; these read RTKRDK and AKS.

It belongs to the eukaryotic initiation factor 4E family. As to quaternary structure, EIF4F is a multi-subunit complex, the composition of which varies with external and internal environmental conditions. It is composed of at least EIF4A, EIF4E and EIF4G.

Its function is as follows. Recognizes and binds the 7-methylguanosine-containing mRNA cap during an early step in the initiation of protein synthesis and facilitates ribosome binding by inducing the unwinding of the mRNAs secondary structures. This chain is Eukaryotic translation initiation factor 4E type 1B (Eif4e1b), found in Mus musculus (Mouse).